Here is a 1224-residue protein sequence, read N- to C-terminus: ATP-dependent helicase/deoxyribonuclease subunit B (1224 aa).

The UvrD-like helicase ATP-binding domain maps to 1–326 (MSLRFILGRA…VCAAANRRSE (326 aa)). Position 8–15 (8–15 (GRAGTGKS)) interacts with ATP. Residues 283–584 (QSAPRFQHPE…KLSLIPPELD (302 aa)) enclose the UvrD-like helicase C-terminal domain. Residues cysteine 841, cysteine 1176, cysteine 1179, and cysteine 1185 each coordinate [4Fe-4S] cluster.

The protein belongs to the helicase family. AddB/RexB type 1 subfamily. Heterodimer of AddA and AddB. The cofactor is Mg(2+). [4Fe-4S] cluster is required as a cofactor.

Functionally, the heterodimer acts as both an ATP-dependent DNA helicase and an ATP-dependent, dual-direction single-stranded exonuclease. Recognizes the chi site generating a DNA molecule suitable for the initiation of homologous recombination. The AddB subunit has 5' -&gt; 3' nuclease activity but not helicase activity. The sequence is that of ATP-dependent helicase/deoxyribonuclease subunit B from Heliobacterium modesticaldum (strain ATCC 51547 / Ice1).